A 342-amino-acid chain; its full sequence is MTTMEQRRNQNAVQQQDDEETQHGPFPVEQLQAAGIASVDVKKLRDAGLCTVEGVAYTPRKDLLQIKGISDAKVDKIVEAASKLVPLGFTSASQLHAQRQEIIQITSGSRELDKVLEGGIETGSITELYGEFRSGKTQLCHTLCVTCQLPMDQGGGEGKAMYIDAEGTFRPQRLLQIADRFGLNGADVLENVAYARAYNTDHQSRLLLEAASMMIETRFALLIVDSATALYRTDFSGRGELSARQMHLAKFLRSLQKLADEFGVAVVITNQVVAQVDGSALFAGPQFKPIGGNIMAHATTTRLALRKGRAEERICKVISSPCLPEAEARFQISTEGVTDCKD.

The disordered stretch occupies residues Met1–Gly24. The 30-residue stretch at Thr51–Ala80 folds into the HhH domain. A FtsK domain is found at Gln100–Ile314. Gly130–Thr137 is an ATP binding site.

The protein belongs to the RecA family. RAD51 subfamily. In terms of assembly, self-associates and interacts with XRCC3. Binds to RAD54/CHR25. Interacts with BRCA2A and BRCA2B. Can form a tripartite complex with both BRCA2B and DSS1(I). Detected in various tissues. Higher expression in reproductive tissues than in vegetative tissues, with the highest expression level in young flower buds. At cellular level, is expressed at low levels in flower primordia, then at higher levels in young anthers and at highest levels in both females and males meiocytes. Not detected in gametophytes.

It localises to the nucleus. In terms of biological role, binds to single and double-stranded DNA and exhibits DNA-dependent ATPase activity. Unwinds duplex DNA. Component of the meiotic recombination pathway. Seems to play a role in mediating chromosome homology search, chromosome pairing and synapsis at early stages and probably chromosome crossing-over at later stages in meiosis. Probably is involved in the repair of meiotic double strand breaks (DBSs) generated by AtSPO11-1 and in homologous recombination. Its function is dispensable for vegetative growth and root mitosis. This Arabidopsis thaliana (Mouse-ear cress) protein is DNA repair protein RAD51 homolog 1.